We begin with the raw amino-acid sequence, 93 residues long: Cell division topological specificity factor (93 aa).

The protein belongs to the MinE family.

In terms of biological role, prevents the cell division inhibition by proteins MinC and MinD at internal division sites while permitting inhibition at polar sites. This ensures cell division at the proper site by restricting the formation of a division septum at the midpoint of the long axis of the cell. This chain is Cell division topological specificity factor, found in Alkaliphilus oremlandii (strain OhILAs) (Clostridium oremlandii (strain OhILAs)).